Here is a 90-residue protein sequence, read N- to C-terminus: Small ribosomal subunit protein uS15c (90 aa).

The protein belongs to the universal ribosomal protein uS15 family. Part of the 30S ribosomal subunit.

Its subcellular location is the plastid. The protein localises to the chloroplast. In Hordeum vulgare (Barley), this protein is Small ribosomal subunit protein uS15c (rps15-A).